The chain runs to 1488 residues: Chromosome partition protein MukB (1488 aa).

34-41 (GGNGAGKS) serves as a coordination point for ATP. 3 coiled-coil regions span residues 326 to 418 (LEAD…QYNQ), 444 to 472 (LDTF…QTAH), and 509 to 602 (RHLA…QRAP). The interval 666 to 783 (PGGAEDQRLN…SLPIFGRAAR (118 aa)) is flexible hinge. Coiled coils occupy residues 835-923 (EAEI…AKLE), 977-1116 (EMLS…AKAG), and 1209-1265 (VEAI…LQSV). The disordered stretch occupies residues 1049–1074 (ADSGAEERARQRRDELHAQLSNNRSR). The segment covering 1051–1065 (SGAEERARQRRDELH) has biased composition (basic and acidic residues).

Belongs to the SMC family. MukB subfamily. In terms of assembly, homodimerization via its hinge domain. Binds to DNA via its C-terminal region. Interacts, and probably forms a ternary complex, with MukE and MukF via its C-terminal region. The complex formation is stimulated by calcium or magnesium. Interacts with tubulin-related protein FtsZ.

It is found in the cytoplasm. It localises to the nucleoid. Its function is as follows. Plays a central role in chromosome condensation, segregation and cell cycle progression. Functions as a homodimer, which is essential for chromosome partition. Involved in negative DNA supercoiling in vivo, and by this means organize and compact chromosomes. May achieve or facilitate chromosome segregation by condensation DNA from both sides of a centrally located replisome during cell division. The sequence is that of Chromosome partition protein MukB from Salmonella gallinarum (strain 287/91 / NCTC 13346).